Here is a 156-residue protein sequence, read N- to C-terminus: Small ribosomal subunit protein uS7 (156 aa).

Belongs to the universal ribosomal protein uS7 family. Part of the 30S ribosomal subunit. Contacts proteins S9 and S11.

One of the primary rRNA binding proteins, it binds directly to 16S rRNA where it nucleates assembly of the head domain of the 30S subunit. Is located at the subunit interface close to the decoding center, probably blocks exit of the E-site tRNA. The chain is Small ribosomal subunit protein uS7 from Shouchella clausii (strain KSM-K16) (Alkalihalobacillus clausii).